We begin with the raw amino-acid sequence, 488 residues long: Bifunctional protein HldE (488 aa).

A ribokinase region spans residues Met-1–Leu-331. Asn-206–Glu-209 is a binding site for ATP. Asp-276 is a catalytic residue. The interval Phe-358–Asn-488 is cytidylyltransferase.

The protein in the N-terminal section; belongs to the carbohydrate kinase PfkB family. This sequence in the C-terminal section; belongs to the cytidylyltransferase family. Homodimer.

It catalyses the reaction D-glycero-beta-D-manno-heptose 7-phosphate + ATP = D-glycero-beta-D-manno-heptose 1,7-bisphosphate + ADP + H(+). It carries out the reaction D-glycero-beta-D-manno-heptose 1-phosphate + ATP + H(+) = ADP-D-glycero-beta-D-manno-heptose + diphosphate. It functions in the pathway nucleotide-sugar biosynthesis; ADP-L-glycero-beta-D-manno-heptose biosynthesis; ADP-L-glycero-beta-D-manno-heptose from D-glycero-beta-D-manno-heptose 7-phosphate: step 1/4. Its pathway is nucleotide-sugar biosynthesis; ADP-L-glycero-beta-D-manno-heptose biosynthesis; ADP-L-glycero-beta-D-manno-heptose from D-glycero-beta-D-manno-heptose 7-phosphate: step 3/4. Catalyzes the phosphorylation of D-glycero-D-manno-heptose 7-phosphate at the C-1 position to selectively form D-glycero-beta-D-manno-heptose-1,7-bisphosphate. Its function is as follows. Catalyzes the ADP transfer from ATP to D-glycero-beta-D-manno-heptose 1-phosphate, yielding ADP-D-glycero-beta-D-manno-heptose. This is Bifunctional protein HldE from Paramagnetospirillum magneticum (strain ATCC 700264 / AMB-1) (Magnetospirillum magneticum).